The following is a 497-amino-acid chain: ADP-dependent glucokinase (497 aa).

The first 22 residues, 1-22 (MALWRGSAYAGFLALAVGCVFL), serve as a signal peptide directing secretion. One can recognise an ADPK domain in the interval 52-497 (SPEGRLAAAW…LFYSEVHPHL (446 aa)). Residues glutamate 297, glutamate 328, and aspartate 481 each coordinate Mg(2+). Aspartate 481 acts as the Proton acceptor in catalysis.

This sequence belongs to the ADP-dependent glucokinase family. Monomer. It depends on Mg(2+) as a cofactor.

The protein localises to the secreted. The enzyme catalyses D-glucose + ADP = D-glucose 6-phosphate + AMP + H(+). The protein operates within carbohydrate degradation; glycolysis. In terms of biological role, catalyzes the phosphorylation of D-glucose to D-glucose 6-phosphate using ADP as the phosphate donor. GDP and CDP can replace ADP, but with reduced efficiency. This is ADP-dependent glucokinase (ADPGK) from Bos taurus (Bovine).